We begin with the raw amino-acid sequence, 418 residues long: Glutamyl-tRNA(Gln) amidotransferase subunit D (418 aa).

The region spanning 74 to 405 is the Asparaginase/glutaminase domain; sequence KNISILSTGG…KEAKELMSKN (332 aa). Active-site residues include Thr-84, Thr-160, Asp-161, and Lys-237.

The protein belongs to the asparaginase 1 family. GatD subfamily. In terms of assembly, heterodimer of GatD and GatE.

It carries out the reaction L-glutamyl-tRNA(Gln) + L-glutamine + ATP + H2O = L-glutaminyl-tRNA(Gln) + L-glutamate + ADP + phosphate + H(+). In terms of biological role, allows the formation of correctly charged Gln-tRNA(Gln) through the transamidation of misacylated Glu-tRNA(Gln) in organisms which lack glutaminyl-tRNA synthetase. The reaction takes place in the presence of glutamine and ATP through an activated gamma-phospho-Glu-tRNA(Gln). The GatDE system is specific for glutamate and does not act on aspartate. The protein is Glutamyl-tRNA(Gln) amidotransferase subunit D of Methanococcus maripaludis (strain DSM 14266 / JCM 13030 / NBRC 101832 / S2 / LL).